The primary structure comprises 561 residues: Transcription factor Clamp (561 aa).

A C2H2-type 1 zinc finger spans residues phenylalanine 127 to histidine 149. Zn(2+) is bound by residues cysteine 129, cysteine 132, histidine 145, and histidine 149. The segment at threonine 290–glutamine 315 is disordered. C2H2-type zinc fingers lie at residues phenylalanine 360–histidine 382, tyrosine 388–histidine 410, tyrosine 416–histidine 438, tyrosine 444–histidine 466, tyrosine 472–histidine 494, and tyrosine 500–histidine 522.

Homodimer. Interacts with msl-2; promoting recruitment of the male-specific lethal (MSL) histone acetyltransferase complex to chromatin. Interacts with Nelf-A. Interacts with NELF-B.

It is found in the nucleus. The protein localises to the chromosome. In terms of biological role, transcription factor involved in X-chromosome dosage compensation in males, the process by which transcription of the single X chromosome in the male is elevated. Binds to the DNA sequence (GA)n. Clamp-binding promotes nucleosome depletion and chromatin accessibility, thereby allowing access to other transcription factors. Specifically binds to cis-acting elements on the X-chromosome named chromatin entry sites and promotes recruitment of the male-specific lethal (MSL) histone acetyltransferase complex, which associates with actively transcribed genes on the male X-chromosome to upregulate their expression. Mechanistically, acts by promoting chromatin accessibility at chromatin entry sites, facilitating DNA-binding of msl-2, followed by MSL complex recruitment. In addition to dosage compensation, also involved in zygotic genome activation (ZGA), a critical event in early embryonic development during which the developmental control passes from maternally provided mRNAs to the expression of the zygotic genome after fertilization. Maternally-provided protein cooperates with Zelda (zld) to activate zygotic transcription by increasing chromatin accessibility at promoters of specific genes and facilitate zld occupancy at a subset of key embryonic promoters. Also acts as an activator of gypsy chromatin insulator function by promoting binding of Cp190 to chromatin. The polypeptide is Transcription factor Clamp (Drosophila melanogaster (Fruit fly)).